Reading from the N-terminus, the 325-residue chain is Deoxyhypusine hydroxylase (325 aa).

Serine 2 bears the N-acetylserine mark. HEAT-like PBS-type repeat units lie at residues 77–103 (LKHE…VMLD) and 110–136 (VRHE…AAKE). Residues histidine 79, glutamate 80, histidine 112, and glutamate 113 each coordinate Fe cation. Serine 126 is subject to Phosphoserine. Phosphothreonine is present on threonine 187. HEAT-like PBS-type repeat units lie at residues 202 to 231 (LFQR…FSAE), 235 to 261 (FKHE…VLGR), and 268 to 294 (VRHE…YLND). 4 residues coordinate Fe cation: histidine 237, glutamate 238, histidine 270, and glutamate 271. Serine 281 is subject to Phosphoserine.

Belongs to the deoxyhypusine hydroxylase family. Fe(2+) serves as cofactor.

It is found in the cytoplasm. It localises to the nucleus. The catalysed reaction is [eIF5A protein]-deoxyhypusine + AH2 + O2 = [eIF5A protein]-hypusine + A + H2O. Its pathway is protein modification; eIF5A hypusination. In terms of biological role, catalyzes the hydroxylation of the N(6)-(4-aminobutyl)-L-lysine intermediate to form hypusine, an essential post-translational modification only found in mature eIF-5A factor. This chain is Deoxyhypusine hydroxylase, found in Saccharomyces cerevisiae (strain ATCC 204508 / S288c) (Baker's yeast).